The following is a 349-amino-acid chain: DNA-directed RNA polymerase subunit alpha (349 aa).

The tract at residues 1 to 226 is alpha N-terminal domain (alpha-NTD); the sequence is MLIAQRPTLV…GLFGLAQELN (226 aa). The tract at residues 241 to 349 is alpha C-terminal domain (alpha-CTD); that stretch reads AALAADLALP…GAEFVETEQY (109 aa). Residues 308–349 are disordered; sequence LKDSPPGFDPRQAVDTYGTDSYNPAFSDPSDDGAEFVETEQY. Residues 336-349 are compositionally biased toward acidic residues; sequence PSDDGAEFVETEQY.

It belongs to the RNA polymerase alpha chain family. Homodimer. The RNAP catalytic core consists of 2 alpha, 1 beta, 1 beta' and 1 omega subunit. When a sigma factor is associated with the core the holoenzyme is formed, which can initiate transcription.

The catalysed reaction is RNA(n) + a ribonucleoside 5'-triphosphate = RNA(n+1) + diphosphate. Its function is as follows. DNA-dependent RNA polymerase catalyzes the transcription of DNA into RNA using the four ribonucleoside triphosphates as substrates. This chain is DNA-directed RNA polymerase subunit alpha, found in Frankia alni (strain DSM 45986 / CECT 9034 / ACN14a).